Here is a 185-residue protein sequence, read N- to C-terminus: Monothiol glutaredoxin-S4, mitochondrial (185 aa).

The N-terminal 36 residues, 1–36 (MARLMSSALIRGLVRSSCSPTVAAVAQPTIHQFRNY), are a transit peptide targeting the mitochondrion. Positions 37–74 (SSGLGGDSTATGDSSSTRVAADPDTHQDFQPTTKSSNM) are disordered. Low complexity predominate over residues 43-53 (DSTATGDSSST). The span at 64-74 (DFQPTTKSSNM) shows a compositional bias: polar residues. The 103-residue stretch at 77 to 179 (DDIVSQDIKE…DVLGDIAQKR (103 aa)) folds into the Glutaredoxin domain. Lys-94 provides a ligand contact to glutathione. Cys-102 lines the [2Fe-2S] cluster pocket. Glutathione is bound by residues Lys-131, Phe-143, and 156-157 (SD).

It belongs to the glutaredoxin family. CGFS subfamily.

Its subcellular location is the mitochondrion. Its function is as follows. May only reduce GSH-thiol disulfides, but not protein disulfides. In Oryza sativa subsp. japonica (Rice), this protein is Monothiol glutaredoxin-S4, mitochondrial (GRXS4).